We begin with the raw amino-acid sequence, 207 residues long: Guanylate kinase (207 aa).

The Guanylate kinase-like domain maps to 4–184 (GTLYIVSAPS…ALSDLKTIIR (181 aa)). 11 to 18 (APSGAGKS) is a binding site for ATP.

It belongs to the guanylate kinase family.

The protein localises to the cytoplasm. It carries out the reaction GMP + ATP = GDP + ADP. In terms of biological role, essential for recycling GMP and indirectly, cGMP. The chain is Guanylate kinase (gmk) from Salmonella typhimurium (strain LT2 / SGSC1412 / ATCC 700720).